A 593-amino-acid polypeptide reads, in one-letter code: Double-stranded RNA-binding protein 2 (593 aa).

2 DRBM domains span residues 1-70 (MYKN…ELSK) and 87-155 (IYKN…ELKQ). Residues 188–197 (LNQTNGGKTP) are compositionally biased toward polar residues. Disordered stretches follow at residues 188 to 221 (LNQT…KSNA), 357 to 408 (APDF…ESNQ), and 546 to 593 (VNSS…KLHI). The span at 205–219 (SSNRPSSRRPSYPKS) shows a compositional bias: low complexity. A compositionally biased stretch (polar residues) spans 378–408 (ESSPASEQESKSHTASSSATRSPSQQLESNQ). The span at 572–586 (RTNTSDTSNAATASS) shows a compositional bias: low complexity.

Binds double-stranded RNA. The polypeptide is Double-stranded RNA-binding protein 2 (DRB2) (Oryza sativa subsp. japonica (Rice)).